We begin with the raw amino-acid sequence, 95 residues long: Ferredoxin-like protein FixX (95 aa).

This sequence belongs to the bacterial-type ferredoxin family. FixX subfamily.

Its function is as follows. Could be part of an electron transfer system required for anaerobic carnitine reduction. Could be a 3Fe-4S cluster-containing protein. The sequence is that of Ferredoxin-like protein FixX (fixX) from Shigella flexneri.